An 88-amino-acid polypeptide reads, in one-letter code: MIKNIVISFEEQKEESRGSVEFQVFSFTNKIRRLTSHLELHRKDYLSQRGLRKILGKRQRLLAYLSKKNRVRYKELINQLNIRELKTR.

The protein belongs to the universal ribosomal protein uS15 family. In terms of assembly, part of the 30S ribosomal subunit.

It is found in the plastid. It localises to the chloroplast. The polypeptide is Small ribosomal subunit protein uS15c (rps15) (Arabidopsis thaliana (Mouse-ear cress)).